The following is an 804-amino-acid chain: Probable replication endonuclease from prophage-like region (804 aa).

Catalysis depends on O-(5'-phospho-DNA)-tyrosine intermediate residues Y498 and Y502.

This sequence belongs to the phage GPA family.

Functionally, possible endonuclease which induces a single-strand cut and initiates DNA replication. This is Probable replication endonuclease from prophage-like region from Shigella boydii serotype 4 (strain Sb227).